Consider the following 30-residue polypeptide: Alanine carboxypeptidase (30 aa).

The catalysed reaction is Release of a C-terminal alanine from a peptide or a variety of pteroyl or acyl groups.. The chain is Alanine carboxypeptidase from Geobacillus stearothermophilus (Bacillus stearothermophilus).